Consider the following 134-residue polypeptide: DNA-binding protein inhibitor ID-2 (134 aa).

Residues Ser-14 and Ser-25 each carry the phosphoserine modification. The 53-residue stretch at 23-75 (SRSKTPVDDPMSLLYNMNDCYSKLKELVPSIPQNKKVSKMEILQHVIDYILDL) folds into the bHLH domain. The short motif at 106 to 115 (LNTDISILSL) is the Nuclear export signal element.

Interacts with GATA4 and NKX2-5. Interacts with NR0B2. Interacts with CLOCK and BMAL1. Interacts with IFI204. Interacts with NEDD9/HEF1. Interacts with ASB4; this interaction promotes ID2 proteasomal degradation. In terms of processing, ubiquitinated in a ASB4-depedent manner, leading to proteasomal degradation. Post-translationally, phosphorylated in vitro by CDK1, PKA and PKC. As to expression, highly expressed in early fetal tissues, including those of the central nervous system.

The protein localises to the cytoplasm. It is found in the nucleus. Its function is as follows. Transcriptional regulator (lacking a basic DNA binding domain) which negatively regulates the basic helix-loop-helix (bHLH) transcription factors by forming heterodimers and inhibiting their DNA binding and transcriptional activity. Implicated in regulating a variety of cellular processes, including cellular growth, senescence, differentiation, apoptosis, angiogenesis, and neoplastic transformation. Inhibits skeletal muscle and cardiac myocyte differentiation. Regulates the circadian clock by repressing the transcriptional activator activity of the CLOCK-BMAL1 heterodimer. Restricts the CLOCK and BMAL1 localization to the cytoplasm. Plays a role in both the input and output pathways of the circadian clock: in the input component, is involved in modulating the magnitude of photic entrainment and in the output component, contributes to the regulation of a variety of liver clock-controlled genes involved in lipid metabolism. This is DNA-binding protein inhibitor ID-2 (ID2) from Homo sapiens (Human).